A 156-amino-acid chain; its full sequence is Small ribosomal subunit protein uS7 (156 aa).

The protein belongs to the universal ribosomal protein uS7 family. Part of the 30S ribosomal subunit. Contacts proteins S9 and S11.

In terms of biological role, one of the primary rRNA binding proteins, it binds directly to 16S rRNA where it nucleates assembly of the head domain of the 30S subunit. Is located at the subunit interface close to the decoding center, probably blocks exit of the E-site tRNA. This Caldanaerobacter subterraneus subsp. tengcongensis (strain DSM 15242 / JCM 11007 / NBRC 100824 / MB4) (Thermoanaerobacter tengcongensis) protein is Small ribosomal subunit protein uS7.